Here is a 448-residue protein sequence, read N- to C-terminus: Histidinol dehydrogenase (448 aa).

Residues Tyr136, Gln197, and Asn220 each coordinate NAD(+). Residues Ser243, Gln265, and His268 each coordinate substrate. Zn(2+) contacts are provided by Gln265 and His268. Catalysis depends on proton acceptor residues Glu333 and His334. His334, Asp367, Glu421, and His426 together coordinate substrate. A Zn(2+)-binding site is contributed by Asp367. His426 is a binding site for Zn(2+).

It belongs to the histidinol dehydrogenase family. Zn(2+) is required as a cofactor.

The catalysed reaction is L-histidinol + 2 NAD(+) + H2O = L-histidine + 2 NADH + 3 H(+). Its pathway is amino-acid biosynthesis; L-histidine biosynthesis; L-histidine from 5-phospho-alpha-D-ribose 1-diphosphate: step 9/9. Functionally, catalyzes the sequential NAD-dependent oxidations of L-histidinol to L-histidinaldehyde and then to L-histidine. The chain is Histidinol dehydrogenase from Pseudomonas syringae pv. tomato (strain ATCC BAA-871 / DC3000).